Reading from the N-terminus, the 841-residue chain is MLRTGVKRRLGPFAGYDEDDAATGGVSRRSKYSQQQSQHYYYGHNQSSYRDSGASHPNWKRNAHLMPPPLSSPSSPPPQYDKNIAALTHLNKKLDCLGPDDLECLKAMIRIREARAQGRRPEPSSAPSILESSLVSSNNSNNNTTLSLGGGGGGDYHRQTSPDIRDYTTGSLGLCMFPMDLPDPIKLLENRYTDNDRHAPAVVTHDELINTNYLLLFRKHFDALPPEELRVLVQDRTFAINNAPSLDVVAAMADENLTYVKFHRVHNLPVNPKDLYMSTLGLIKYATFNKLNLGELSCLLDSPGGGGSDREYHILRQIANKPASPCRKGGSSAAAAASFDVLRRPPLSFKHPLQQALALIASFARIVGVIRRRSLRHSGPFFIRDFDDTGATDSYRCGMISELIFDYLPGHRCQNEICRVKLKKLLQPYTSTLFFCAYNNTRKHPNGLPARRSPERRAPDATPNIPRLAYRRSATTSPEVEPAPPSRMTSSSPRVDSRGGGGDRRGDSSSTSSNHHRHHTRRARTRSTHDSSSSGSRRRSSATDGRRSRRGSRRGEAQRESNGHHSSKSPSTVSSTTVHGQNGARGDSAPSRKSQQSQQQPETTSKESSKTAAMPPPPSPCSPSPASRERRPSKSPSSSPRPHDPPSGEPADAEKELATAGDEDEGVRSPGECSVATRRGSSADESSDSSSSSSDSSSSSDEEESDVEDCRELDLQSKRLEEALEERCERDFEADDEEFAEPIEEDDLHCSLDMEEDIEDEPLDPETESVWTASVTPLAAPPSIRILDHEPGDAEEEEESDTDFYDETDQPLNKRIHLRSATPTDDVIMECDLSYSEMDSD.

Disordered stretches follow at residues 12–82 and 115–163; these read PFAG…QYDK and RAQG…TSPD. Positions 32–49 are enriched in low complexity; the sequence is YSQQQSQHYYYGHNQSSY. Over residues 66 to 79 the composition is skewed to pro residues; that stretch reads MPPPLSSPSSPPPQ. The segment covering 132 to 147 has biased composition (low complexity); that stretch reads SSLVSSNNSNNNTTLS. Zn(2+)-binding residues include cysteine 298, histidine 411, cysteine 413, and cysteine 418. Residues 298–418 form a CHC2-type zinc finger; sequence CLLDSPGGGG…PGHRCQNEIC (121 aa). Disordered regions lie at residues 444–749 and 774–811; these read HPNG…DDLH and SVTP…TDQP. Residues 495–507 show a composition bias toward basic and acidic residues; the sequence is VDSRGGGGDRRGD. Over residues 514–526 the composition is skewed to basic residues; it reads NHHRHHTRRARTR. Residues 553–563 show a composition bias toward basic and acidic residues; that stretch reads RRGEAQRESNG. 2 stretches are compositionally biased toward low complexity: residues 568-579 and 591-603; these read KSPSTVSSTTVH and SRKS…QPET. Positions 614–623 are enriched in pro residues; that stretch reads MPPPPSPCSP. The span at 641-657 shows a compositional bias: basic and acidic residues; the sequence is RPHDPPSGEPADAEKEL. Positions 688–699 are enriched in low complexity; it reads DSSSSSSDSSSS. Over residues 708–731 the composition is skewed to basic and acidic residues; sequence EDCRELDLQSKRLEEALEERCERD. Acidic residues-rich tracts occupy residues 732-749 and 793-809; these read FEAD…DDLH and DAEE…DETD.

It belongs to the HHV-1 ICP27 protein family.

It localises to the virion tegument. It is found in the virion. The protein resides in the host nucleus. Its subcellular location is the host cytoplasm. Functionally, immediate early (EI) protein that plays many roles during productive infection including regulation of viral gene expression and nuclear export of intronless viral RNAs. This Mus musculus (Mouse) protein is mRNA export factor ICP27 homolog.